Consider the following 94-residue polypeptide: Co-chaperonin GroES (94 aa).

This sequence belongs to the GroES chaperonin family. In terms of assembly, heptamer of 7 subunits arranged in a ring. Interacts with the chaperonin GroEL.

The protein localises to the cytoplasm. Its function is as follows. Together with the chaperonin GroEL, plays an essential role in assisting protein folding. The GroEL-GroES system forms a nano-cage that allows encapsulation of the non-native substrate proteins and provides a physical environment optimized to promote and accelerate protein folding. GroES binds to the apical surface of the GroEL ring, thereby capping the opening of the GroEL channel. The chain is Co-chaperonin GroES from Bacillus mycoides (strain KBAB4) (Bacillus weihenstephanensis).